The following is a 298-amino-acid chain: Small ribosomal subunit protein uS3 (298 aa).

The KH type-2 domain maps to 38 to 106 (IRRRLSRGME…QVQLNILEVK (69 aa)). The segment at 212 to 298 (KQKQQESEVR…EPRADEKTEG (87 aa)) is disordered. Over residues 214 to 237 (KQQESEVRPPRGERGERGGRPERG) the composition is skewed to basic and acidic residues. A compositionally biased stretch (polar residues) spans 265 to 278 (GSAQSPEQAQTSGD).

Belongs to the universal ribosomal protein uS3 family. Part of the 30S ribosomal subunit. Forms a tight complex with proteins S10 and S14.

Binds the lower part of the 30S subunit head. Binds mRNA in the 70S ribosome, positioning it for translation. This chain is Small ribosomal subunit protein uS3, found in Saccharopolyspora erythraea (strain ATCC 11635 / DSM 40517 / JCM 4748 / NBRC 13426 / NCIMB 8594 / NRRL 2338).